We begin with the raw amino-acid sequence, 214 residues long: MNNLKRFTKSIFSCIALSGLLFLGGCETLPPTTDLSPITVDNATQAKAWELQGKLAIRTPQDKLSANLYWRHSEERDELTLTTMLGTTVLTLDATPNSAHLHIDGKDFRDSNAQALLERVSGWSIPINDLPLWITGQVGGLDRVITVDSNGKTKQIQNSQTLPPWVVTFLSWQPQSGAEVPYQLKLERGDLQLKLQLNQWQALGKPSILLGEKP.

The N-terminal stretch at 1–25 (MNNLKRFTKSIFSCIALSGLLFLGG) is a signal peptide. The N-palmitoyl cysteine moiety is linked to residue Cys-26. Cys-26 carries S-diacylglycerol cysteine lipidation.

The protein belongs to the LolB family. Monomer.

The protein localises to the cell outer membrane. Plays a critical role in the incorporation of lipoproteins in the outer membrane after they are released by the LolA protein. The chain is Outer-membrane lipoprotein LolB from Shewanella sp. (strain MR-7).